Here is a 394-residue protein sequence, read N- to C-terminus: Phosphoglycerate kinase (394 aa).

Residues 21–23 (DFN), R36, 59–62 (HLGR), R118, and R151 contribute to the substrate site. S183 carries the phosphoserine modification. Positions 201 and 292 each coordinate ATP. T299 carries the phosphothreonine modification. Residues E323 and 350–353 (GGDS) contribute to the ATP site.

This sequence belongs to the phosphoglycerate kinase family. As to quaternary structure, monomer.

The protein resides in the cytoplasm. It catalyses the reaction (2R)-3-phosphoglycerate + ATP = (2R)-3-phospho-glyceroyl phosphate + ADP. It participates in carbohydrate degradation; glycolysis; pyruvate from D-glyceraldehyde 3-phosphate: step 2/5. The polypeptide is Phosphoglycerate kinase (Bacillus cereus (strain B4264)).